Consider the following 91-residue polypeptide: Large ribosomal subunit protein uL29 (91 aa).

Residues 67 to 91 form a disordered region; that stretch reads AAPLAESSAPAKTKSRARKSKKEAL. The segment covering 79 to 91 has biased composition (basic residues); it reads TKSRARKSKKEAL.

It belongs to the universal ribosomal protein uL29 family.

The polypeptide is Large ribosomal subunit protein uL29 (Acidobacterium capsulatum (strain ATCC 51196 / DSM 11244 / BCRC 80197 / JCM 7670 / NBRC 15755 / NCIMB 13165 / 161)).